Reading from the N-terminus, the 108-residue chain is Putative double-stranded DNA mimic protein PBPRA1522 (108 aa).

Belongs to the putative dsDNA mimic protein family.

In terms of biological role, may act as a double-stranded DNA (dsDNA) mimic. Probably regulates the activity of a dsDNA-binding protein. This chain is Putative double-stranded DNA mimic protein PBPRA1522, found in Photobacterium profundum (strain SS9).